Here is a 454-residue protein sequence, read N- to C-terminus: Signal recognition particle protein (454 aa).

GTP is bound by residues 102–109 (GLQGTGKT), 184–188 (DTAGR), and 242–245 (TKMD).

It belongs to the GTP-binding SRP family. SRP54 subfamily. As to quaternary structure, part of the signal recognition particle protein translocation system, which is composed of SRP and FtsY.

It localises to the cytoplasm. It carries out the reaction GTP + H2O = GDP + phosphate + H(+). In terms of biological role, involved in targeting and insertion of nascent membrane proteins into the cytoplasmic membrane. Binds to the hydrophobic signal sequence of the ribosome-nascent chain (RNC) as it emerges from the ribosomes. The SRP-RNC complex is then targeted to the cytoplasmic membrane where it interacts with the SRP receptor FtsY. In Aquifex aeolicus (strain VF5), this protein is Signal recognition particle protein.